A 274-amino-acid polypeptide reads, in one-letter code: uncharacterized protein (274 aa).

This is an uncharacterized protein from Bacillus subtilis (strain 168).